Reading from the N-terminus, the 1038-residue chain is Ras GTPase-activating protein 1 (1038 aa).

Methionine 1 carries the N-acetylmethionine modification. The segment covering 1-16 has biased composition (low complexity); it reads MMAAEAGSEEGGPATA. 2 disordered regions span residues 1–24 and 117–152; these read MMAAEAGSEEGGPATAGTGGAAAT and ETLGPGGGFPPLPPPPLLPPLGSGLGTVDEGDSLDG. Residues 124-135 are compositionally biased toward pro residues; it reads GFPPLPPPPLLP. The region spanning 172 to 263 is the SH2 1 domain; it reads WYHGKLDRTI…LKGEKLLYPV (92 aa). The region spanning 270 to 332 is the SH3 domain; that stretch reads EDRRRVRAIL…VEDLVEEVGR (63 aa). The 91-residue stretch at 342–432 folds into the SH2 2 domain; that stretch reads WFHGKISKQE…VEGYYLKEPV (91 aa). Residues 465–568 form the PH domain; it reads NIVKKGYLLK…WMKGLQAFCS (104 aa). Residues 568 to 681 form the C2 domain; it reads SLRKSSPGTS…QKGHATDEWF (114 aa). At tyrosine 606 the chain carries Phosphotyrosine. In terms of domain architecture, Ras-GAP spans 755 to 965; that stretch reads KLESLLLCTL…HRMIMFLDEL (211 aa). A Phosphoserine modification is found at serine 822.

Interacts with SQSTM1. Interacts with SPSB1; the interaction does not promote degradation. Interacts with CAV2 (tyrosine phosphorylated form). Directly interacts with NCK1. Interacts with PDGFRB (tyrosine phosphorylated). Interacts (via SH2 domain) with the 'Tyr-9' phosphorylated form of PDPK1. Interacts with tyrosine-phosphorylated EPHB4. In terms of processing, phosphorylated by SRC and LCK. The phosphorylation SRC inhibits its ability to stimulate the Ras-GTPase activity, whereas phosphorylation by LCK does not display any effect on stimulation activity.

It is found in the cytoplasm. Functionally, inhibitory regulator of the Ras-cyclic AMP pathway. Stimulates the GTPase of normal but not oncogenic Ras p21. The chain is Ras GTPase-activating protein 1 (Rasa1) from Rattus norvegicus (Rat).